We begin with the raw amino-acid sequence, 354 residues long: Methylthioribose-1-phosphate isomerase (354 aa).

Residues 58-60 (RGA), Arg101, and Gln204 each bind substrate. Catalysis depends on Asp245, which acts as the Proton donor. 255–256 (NK) contributes to the substrate binding site.

Belongs to the eIF-2B alpha/beta/delta subunits family. MtnA subfamily.

It catalyses the reaction 5-(methylsulfanyl)-alpha-D-ribose 1-phosphate = 5-(methylsulfanyl)-D-ribulose 1-phosphate. The protein operates within amino-acid biosynthesis; L-methionine biosynthesis via salvage pathway; L-methionine from S-methyl-5-thio-alpha-D-ribose 1-phosphate: step 1/6. Catalyzes the interconversion of methylthioribose-1-phosphate (MTR-1-P) into methylthioribulose-1-phosphate (MTRu-1-P). The protein is Methylthioribose-1-phosphate isomerase of Xylella fastidiosa (strain M23).